Consider the following 847-residue polypeptide: uncharacterized protein (847 aa).

Positions 116–126 (TGSSELTTSKT) are enriched in polar residues. Disordered regions lie at residues 116–153 (TGSS…TPIE), 208–245 (LKNF…RLSP), and 361–392 (DLEK…SNVI). Residues 128 to 145 (IDVDTKEQENRLKQKAEA) show a composition bias toward basic and acidic residues. Residues 368–378 (SSSASLSTNKL) are compositionally biased toward polar residues.

This is an uncharacterized protein from Caenorhabditis elegans.